The following is a 301-amino-acid chain: Securin (301 aa).

3 disordered regions span residues 1–55 (MLPR…RTVL), 82–120 (DSPT…DTPL), and 218–284 (ASDQ…RSIH). Positions 33-36 (RAPL) match the D-box 1 motif. Residues 38–50 (STKQSNAPSSVTV) show a composition bias toward polar residues. The D-box 2 signature appears at 52–55 (RTVL). Polar residues-rich tracts occupy residues 88 to 98 (EPNSQGISRSA), 110 to 119 (PRRSSLTDTP), and 231 to 245 (VSKQ…STVY). 2 consecutive repeats follow at residues 250–260 (ASGKSIPRPLS) and 270–280 (ASGNSRRRPLS).

It belongs to the securin family. Interacts with the caspase-like cut1, and prevents its protease activity probably by covering its active site. Ubiquitinated by the anaphase promoting complex (APC) at the onset of anaphase, conducting to its degradation.

It localises to the cytoplasm. The protein resides in the nucleus. Regulatory protein, which plays a central role in chromosome stability. Probably acts by blocking the action of key proteins. During the mitosis, it blocks separase/cut1 function, preventing the proteolysis of the cohesin complex and the subsequent segregation of the chromosomes. At the onset of anaphase, it is ubiquitinated, conducting to its destruction and to the liberation of cut1. The chain is Securin (cut2) from Schizosaccharomyces pombe (strain 972 / ATCC 24843) (Fission yeast).